A 552-amino-acid polypeptide reads, in one-letter code: Glucose-6-phosphate isomerase (552 aa).

Catalysis depends on E359, which acts as the Proton donor. Active-site residues include H390 and K514.

This sequence belongs to the GPI family.

Its subcellular location is the cytoplasm. The enzyme catalyses alpha-D-glucose 6-phosphate = beta-D-fructose 6-phosphate. The protein operates within carbohydrate biosynthesis; gluconeogenesis. It functions in the pathway carbohydrate degradation; glycolysis; D-glyceraldehyde 3-phosphate and glycerone phosphate from D-glucose: step 2/4. Its function is as follows. Catalyzes the reversible isomerization of glucose-6-phosphate to fructose-6-phosphate. The polypeptide is Glucose-6-phosphate isomerase (Streptomyces griseus subsp. griseus (strain JCM 4626 / CBS 651.72 / NBRC 13350 / KCC S-0626 / ISP 5235)).